Here is a 182-residue protein sequence, read N- to C-terminus: Large ribosomal subunit protein uL5 (182 aa).

The protein belongs to the universal ribosomal protein uL5 family. Part of the 50S ribosomal subunit; part of the 5S rRNA/L5/L18/L25 subcomplex. Contacts the 5S rRNA and the P site tRNA. Forms a bridge to the 30S subunit in the 70S ribosome.

In terms of biological role, this is one of the proteins that bind and probably mediate the attachment of the 5S RNA into the large ribosomal subunit, where it forms part of the central protuberance. In the 70S ribosome it contacts protein S13 of the 30S subunit (bridge B1b), connecting the 2 subunits; this bridge is implicated in subunit movement. Contacts the P site tRNA; the 5S rRNA and some of its associated proteins might help stabilize positioning of ribosome-bound tRNAs. The sequence is that of Large ribosomal subunit protein uL5 from Borreliella afzelii (strain PKo) (Borrelia afzelii).